We begin with the raw amino-acid sequence, 304 residues long: Dipeptide transport system permease protein DppC (304 aa).

The segment at 1 to 24 (MKTEHAKPLMTPEPNSPPPEDQYT) is disordered. Transmembrane regions (helical) follow at residues 41–61 (LAIVGLIIITSFILIAIFAPL), 108–128 (VGFFAVTGALIFGTTLGLIAG), 141–161 (IFDIMLAFPSILLAIAIVAIL), 164–184 (SLQNALIAIAIVNVPIFGRLV), 227–247 (ATLGFGTAILEAAALGFLGLG), and 271–291 (WTVLFPGFSIMLVVLGFNMIG). The region spanning 102-291 (ARLSLQVGFF…LVVLGFNMIG (190 aa)) is the ABC transmembrane type-1 domain.

It belongs to the binding-protein-dependent transport system permease family. OppBC subfamily.

It is found in the cell membrane. Probably part of the ABC transporter Dpp involved in dipeptide transport. Responsible for the translocation of the substrate across the membrane. The protein is Dipeptide transport system permease protein DppC (dppC) of Alkalihalophilus pseudofirmus (strain ATCC BAA-2126 / JCM 17055 / OF4) (Bacillus pseudofirmus).